The primary structure comprises 88 residues: MASVVPLKDRRLLEVKLGELPSWILMRDFTPSGIAGAFQRGYYRYYNKYVNVKKGSVAGLSMVLAAYVVFNYCRSYKELKHERLRKYH.

At Ala-2 the chain carries N-acetylalanine. Residue Ser-3 is modified to Phosphoserine. Lys-16 carries the N6-acetyllysine modification. A helical membrane pass occupies residues 62–79 (MVLAAYVVFNYCRSYKEL).

The protein belongs to the ATPase F chain family. Component of the ATP synthase complex composed at least of ATP5F1A/subunit alpha, ATP5F1B/subunit beta, ATP5MC1/subunit c (homooctomer), MT-ATP6/subunit a, MT-ATP8/subunit 8, ATP5ME/subunit e, ATP5MF/subunit f, ATP5MG/subunit g, ATP5MK/subunit k, ATP5MJ/subunit j, ATP5F1C/subunit gamma, ATP5F1D/subunit delta, ATP5F1E/subunit epsilon, ATP5PF/subunit F6, ATP5PB/subunit b, ATP5PD/subunit d, ATP5PO/subunit OSCP. ATP synthase complex consists of a soluble F(1) head domain (subunits alpha(3) and beta(3)) - the catalytic core - and a membrane F(0) domain - the membrane proton channel (subunits c, a, 8, e, f, g, k and j). These two domains are linked by a central stalk (subunits gamma, delta, and epsilon) rotating inside the F1 region and a stationary peripheral stalk (subunits F6, b, d, and OSCP).

The protein resides in the mitochondrion. It localises to the mitochondrion inner membrane. Subunit f, of the mitochondrial membrane ATP synthase complex (F(1)F(0) ATP synthase or Complex V) that produces ATP from ADP in the presence of a proton gradient across the membrane which is generated by electron transport complexes of the respiratory chain. ATP synthase complex consist of a soluble F(1) head domain - the catalytic core - and a membrane F(1) domain - the membrane proton channel. These two domains are linked by a central stalk rotating inside the F(1) region and a stationary peripheral stalk. During catalysis, ATP synthesis in the catalytic domain of F(1) is coupled via a rotary mechanism of the central stalk subunits to proton translocation. In vivo, can only synthesize ATP although its ATP hydrolase activity can be activated artificially in vitro. Part of the complex F(0) domain. This chain is ATP synthase F(0) complex subunit f, mitochondrial, found in Sus scrofa (Pig).